The primary structure comprises 52 residues: Ovomucoid (52 aa).

The Kazal-like domain maps to V2 to C52. Cystine bridges form between C4-C34, C12-C31, and C20-C52. An N-linked (GlcNAc...) asparagine glycan is attached at N41.

It localises to the secreted. This Scythrops novaehollandiae (Channel-billed cuckoo) protein is Ovomucoid.